Consider the following 388-residue polypeptide: Myosin light chain kinase family member 4 (388 aa).

Residues 106-361 enclose the Protein kinase domain; that stretch reads VSKTEILGGG…ASEALKHPWL (256 aa). ATP-binding positions include 112 to 120 and lysine 135; that span reads LGGGRFGQV. Aspartate 227 (proton acceptor) is an active-site residue.

The protein belongs to the protein kinase superfamily. CAMK Ser/Thr protein kinase family.

The catalysed reaction is L-seryl-[protein] + ATP = O-phospho-L-seryl-[protein] + ADP + H(+). It catalyses the reaction L-threonyl-[protein] + ATP = O-phospho-L-threonyl-[protein] + ADP + H(+). This is Myosin light chain kinase family member 4 (MYLK4) from Homo sapiens (Human).